The primary structure comprises 330 residues: Aspartate--ammonia ligase (330 aa).

It belongs to the class-II aminoacyl-tRNA synthetase family. AsnA subfamily.

It is found in the cytoplasm. The catalysed reaction is L-aspartate + NH4(+) + ATP = L-asparagine + AMP + diphosphate + H(+). It participates in amino-acid biosynthesis; L-asparagine biosynthesis; L-asparagine from L-aspartate (ammonia route): step 1/1. This is Aspartate--ammonia ligase from Streptococcus pyogenes serotype M5 (strain Manfredo).